An 85-amino-acid chain; its full sequence is Large ribosomal subunit protein bL27 (85 aa).

Positions 1 to 20 (MAHKKGASSSRNGRDSNAQR) are disordered. Polar residues predominate over residues 7–19 (ASSSRNGRDSNAQ).

Belongs to the bacterial ribosomal protein bL27 family.

In Kineococcus radiotolerans (strain ATCC BAA-149 / DSM 14245 / SRS30216), this protein is Large ribosomal subunit protein bL27.